The primary structure comprises 203 residues: Guanylate kinase (203 aa).

One can recognise a Guanylate kinase-like domain in the interval 3–181; the sequence is GTLYIVSAPS…ALDDLKAIFR (179 aa). 10–17 is an ATP binding site; it reads APSGAGKT.

This sequence belongs to the guanylate kinase family.

It is found in the cytoplasm. The catalysed reaction is GMP + ATP = GDP + ADP. Essential for recycling GMP and indirectly, cGMP. This is Guanylate kinase (gmk) from Pseudomonas aeruginosa (strain ATCC 15692 / DSM 22644 / CIP 104116 / JCM 14847 / LMG 12228 / 1C / PRS 101 / PAO1).